Consider the following 493-residue polypeptide: Cysteine--tRNA ligase (493 aa).

Residue cysteine 41 coordinates Zn(2+). A 'HIGH' region motif is present at residues 43–53; the sequence is PTVYNYPHIGN. Residues cysteine 231, histidine 256, and glutamate 260 each coordinate Zn(2+). The 'KMSKS' region signature appears at 296–300; it reads KMSKS. ATP is bound at residue lysine 299.

The protein belongs to the class-I aminoacyl-tRNA synthetase family. Monomer. Zn(2+) is required as a cofactor.

The protein resides in the cytoplasm. It carries out the reaction tRNA(Cys) + L-cysteine + ATP = L-cysteinyl-tRNA(Cys) + AMP + diphosphate. This Novosphingobium aromaticivorans (strain ATCC 700278 / DSM 12444 / CCUG 56034 / CIP 105152 / NBRC 16084 / F199) protein is Cysteine--tRNA ligase.